Reading from the N-terminus, the 869-residue chain is Leucine--tRNA ligase (869 aa).

A 'HIGH' region motif is present at residues 51 to 61; that stretch reads PYPSGRIHMGH. Residues 636–640 carry the 'KMSKS' region motif; that stretch reads KMSKS. Position 639 (K639) interacts with ATP.

The protein belongs to the class-I aminoacyl-tRNA synthetase family.

Its subcellular location is the cytoplasm. The catalysed reaction is tRNA(Leu) + L-leucine + ATP = L-leucyl-tRNA(Leu) + AMP + diphosphate. The chain is Leucine--tRNA ligase from Dinoroseobacter shibae (strain DSM 16493 / NCIMB 14021 / DFL 12).